We begin with the raw amino-acid sequence, 85 residues long: MNTVTDQPHSISVNQLRAFIERIERLEEEKKTISDDIKEVYAELKGSGFDSKAVRSIIRLRKKEDHERMEEEAIIQLYKNALGMS.

It belongs to the UPF0335 family.

The protein is UPF0335 protein BQ12070 of Bartonella quintana (strain Toulouse) (Rochalimaea quintana).